The following is a 104-amino-acid chain: Large ribosomal subunit protein bL21 (104 aa).

The protein belongs to the bacterial ribosomal protein bL21 family. As to quaternary structure, part of the 50S ribosomal subunit. Contacts protein L20.

Functionally, this protein binds to 23S rRNA in the presence of protein L20. This chain is Large ribosomal subunit protein bL21, found in Gluconacetobacter diazotrophicus (strain ATCC 49037 / DSM 5601 / CCUG 37298 / CIP 103539 / LMG 7603 / PAl5).